Reading from the N-terminus, the 685-residue chain is Probable transcriptional regulator SLK3 (685 aa).

Disordered stretches follow at residues 25–66 and 108–129; these read NLPG…ENSY and LQQQ…SQRL. Low complexity predominate over residues 39-56; the sequence is QHLPQQQQRQLLEQQAGQ. Residues 176–423 are dimerization; it reads PAENCITYWR…EHKVGPLEGL (248 aa). Positions 185–199 match the Nuclear localization signal motif; that stretch reads RKFVAEYFSPRAKQR. The span at 447–459 shows a compositional bias: polar residues; the sequence is GNSGAMSGPAQAQ. Disordered regions lie at residues 447–491, 512–591, and 611–658; these read GNSG…MNGS, NNQN…NTQE, and QQQA…NNLP. Residues 460–471 show a composition bias toward low complexity; it reads MTLSSGTMSGST. Residues 512-524 show a composition bias toward polar residues; it reads NNQNSNTGNQEGF. Over residues 525–543 the composition is skewed to low complexity; the sequence is SSQNPTLNSNQSPSSSSQQ. Polar residues-rich tracts occupy residues 544-588, 611-636, and 645-658; these read RENL…SHGN, QQQA…TSNI, and RINS…NNLP.

This sequence belongs to the adn1/SEU family.

It localises to the nucleus. Its function is as follows. Probable transcription regulator that functions in the development of the carpel margin meristem similarly to SEUSS (SEU). In association with SEU, supports organ development from meristematic regions by facilitating auxin response and thus organ initiation, and by sustaining meristematic potential through the maintenance of PHABULOSA expression. The chain is Probable transcriptional regulator SLK3 (SLK3) from Arabidopsis thaliana (Mouse-ear cress).